The sequence spans 175 residues: uncharacterized protein (175 aa).

A signal peptide spans 1 to 23; that stretch reads MILVLLLILIAFLYIYFPSSLNQ.

This is an uncharacterized protein from Invertebrate iridescent virus 6 (IIV-6).